Reading from the N-terminus, the 625-residue chain is Archaeosine synthase subunit alpha (625 aa).

Residues 556–624 (KYVVKIDDFV…VAVDVRHVKK (69 aa)) form the PUA domain.

This sequence belongs to the archaeosine synthase type 1 family. As to quaternary structure, forms a robust complex with the archaeosine synthase beta subunit RaSEA. Formation of this complex highly increases lysine transfer activity. The complex likely consists of an alpha(2)beta(2) heterotetrameric structure.

The catalysed reaction is 7-cyano-7-carbaguanosine(15) in tRNA + L-lysine = 7-N-[(5S)-5-amino-5-carboxypentyl]formamidino-7-deazaguanosine(15) in tRNA. The protein operates within tRNA modification; archaeosine-tRNA biosynthesis. Its function is as follows. Functions in the biosynthesis of archaeosine, a modified nucleoside present in the dihydrouridine loop (D-loop) of archaeal tRNAs. Catalyzes the addition of L-lysine to the cyano group of 7-cyano-7-deazaguanine (preQ0)-modified tRNAs at position 15, to generate q0kN15-tRNA, a q0N lysine adduct identified as 7-N-[(5S)-5-amino-5-carboxypentyl]formamidino-7-deazaguanosine. This Methanosarcina acetivorans (strain ATCC 35395 / DSM 2834 / JCM 12185 / C2A) protein is Archaeosine synthase subunit alpha.